The following is a 620-amino-acid chain: MKRINILDECTFNKIAAGEVVERPFSVVKELVENSIDAEAKNITVEVKNGGQDLIKVSDDGAGIYADDIQKAFLTHATSKILNIDDIFSLNTMGFRGEALPSIASISKILLKSKPLSETSGKEIYMEGGNFISFNDVGMNTGTTIKVTDLFYNVPARLKFLKSSSRESSLISDIIQRLSLANPDIAFKLINNGKTVLNTYGSGNLEDAIRVIYGKKTLENISYFESHSDIISVYGYIGNAELSRGSRNNQSIFVNKRYIKSGLITAAVENAFKSFLTINKFPFFVIFIDIFPEYIDVNVHPTKTEIKFKEDKIVFSFVFKTVHESIKKSLYKEFNEQIKEDVKEDNKEIIKENPSLFQNVEKVQIPIDLKSASMDIERKSLVNSVLCNENNIVKDNINKNIYIDTKENLSENKLKNILKENTEDMVSKLPDMKIIGQFDNTYILAESVKNLYIIDQHAAHEKILFETYRDKIKKDEVKSQLLLQPIVLELDSEDFSYYVDNKELFYKTGFNIEVFGENTINIREVPFIMGKPDINNLFMDIINNIKAMGSGETIEVKYDSIAMLACKSAVKAHDKLSKEEMEALINDLRFAKDPFNCPHGRPTIIKITSLELEKKFKRIQ.

Belongs to the DNA mismatch repair MutL/HexB family.

Functionally, this protein is involved in the repair of mismatches in DNA. It is required for dam-dependent methyl-directed DNA mismatch repair. May act as a 'molecular matchmaker', a protein that promotes the formation of a stable complex between two or more DNA-binding proteins in an ATP-dependent manner without itself being part of a final effector complex. In Clostridium tetani (strain Massachusetts / E88), this protein is DNA mismatch repair protein MutL.